A 423-amino-acid polypeptide reads, in one-letter code: Putative protein phosphatase 2C 50 (423 aa).

Residues 52–380 form the PPM-type phosphatase domain; that stretch reads IFAFPFPTGT…DNMAAVVVPL (329 aa). Aspartate 74, glycine 75, aspartate 320, and aspartate 371 together coordinate Mn(2+).

This sequence belongs to the PP2C family. It depends on Mg(2+) as a cofactor. Requires Mn(2+) as cofactor.

It catalyses the reaction O-phospho-L-seryl-[protein] + H2O = L-seryl-[protein] + phosphate. The catalysed reaction is O-phospho-L-threonyl-[protein] + H2O = L-threonyl-[protein] + phosphate. This is Putative protein phosphatase 2C 50 from Arabidopsis thaliana (Mouse-ear cress).